Reading from the N-terminus, the 142-residue chain is Hemoglobin subunit alpha-C (142 aa).

Ala2 is subject to N-acetylalanine. The region spanning 2-142 (ALNCDDKAHI…VSGLLTSKYR (141 aa)) is the Globin domain. His59 serves as a coordination point for O2. His88 lines the heme b pocket.

It belongs to the globin family. Heterotetramer of either two alpha-B chains or two alpha-C chains and two beta chains. The two major hemoglobins, B and C, associate upon deoxygenation to form a trimer of tetramers, BC2, that has a much lower affinity for oxygen than either component alone. As to expression, red blood cells.

Functionally, the alpha-C chain is a component of adult hemoglobin C. The chain is Hemoglobin subunit alpha-C from Aquarana catesbeiana (American bullfrog).